The sequence spans 444 residues: Methionine aminopeptidase 2-1 (444 aa).

A disordered region spans residues 1-92 (MAAQVTEKLQ…VPVSNLFPNN (92 aa)). Over residues 15–29 (NGQNGDAKANSTAVG) the composition is skewed to polar residues. The span at 34 to 45 (GEAEDDSDDEKE) shows a compositional bias: acidic residues. The span at 59 to 73 (AKKKKRKSKKKKKGG) shows a compositional bias: basic residues. His197 contributes to the substrate binding site. A divalent metal cation-binding residues include Asp217, Asp228, and His297. Substrate is bound at residue His305. Residues Glu330 and Glu425 each coordinate a divalent metal cation.

Belongs to the peptidase M24A family. Methionine aminopeptidase eukaryotic type 2 subfamily. Co(2+) serves as cofactor. It depends on Zn(2+) as a cofactor. The cofactor is Mn(2+). Requires Fe(2+) as cofactor.

Its subcellular location is the cytoplasm. The catalysed reaction is Release of N-terminal amino acids, preferentially methionine, from peptides and arylamides.. In terms of biological role, cotranslationally removes the N-terminal methionine from nascent proteins. The N-terminal methionine is often cleaved when the second residue in the primary sequence is small and uncharged (Met-Ala-, Cys, Gly, Pro, Ser, Thr, or Val). The protein is Methionine aminopeptidase 2-1 of Neosartorya fischeri (strain ATCC 1020 / DSM 3700 / CBS 544.65 / FGSC A1164 / JCM 1740 / NRRL 181 / WB 181) (Aspergillus fischerianus).